Reading from the N-terminus, the 633-residue chain is MTAPHETMSFQAEVKQLLHLMIHSLYSNKEIFLRELVSNASDATDKLRFEAIANPALLENDADLAIRIEADPAARTLKITDNGIGMSRDEAIRNLGTIARSGTKEFFQQLSGDQQKDAALIGQFGVGFYSAFIVADKVTVETRRAGLAADEAVRWESAGDGEFSIDAINRAERGSTITLHLREGEDDFLSSYRLQNIIRKYSDHISLPIRMPKEEWDAEAQQQKVTGEWESVNQASALWTRSKSDITDEQYQAFYQHIAHDHEAPLAWTHNRVEGRSEYTQLLYIPARAPFDLWDRNHKAGLKLYVKRVFIMDDADQLLPAYLRWVKGVVDSADLPLNVSRELLQESRDVKAIREGCAKRVLSMLEAMADSEDEAERAKYKTFWEQFGQVLKEGVGEDHGNGERIAKLLRFATTHGDTAEQSVSLVDYVGRMKEGQDKIYYVTADTWVAAKSSPHLEVFRKKGIEVVLLTDRVDEWLLSYLHEFDGKQLVSVARGDLDLGALADEAEKAEQEKASADWKEVVDRAKSVLEGKAKDVRVTLRLTDSASCLVSDDGDMSGYLQRLLKQAGQKAPDAQPILELNPEHALVKKLRDLPDGEAFGDRVRVLFDQALLAEGGMLDDPAAYVQRVNRLLA.

The segment at 1 to 341 (MTAPHETMSF…SADLPLNVSR (341 aa)) is a; substrate-binding. The tract at residues 342 to 562 (ELLQESRDVK…DGDMSGYLQR (221 aa)) is b. The segment at 563 to 633 (LLKQAGQKAP…YVQRVNRLLA (71 aa)) is c.

Belongs to the heat shock protein 90 family. Homodimer.

Its subcellular location is the cytoplasm. Functionally, molecular chaperone. Has ATPase activity. In Cupriavidus metallidurans (strain ATCC 43123 / DSM 2839 / NBRC 102507 / CH34) (Ralstonia metallidurans), this protein is Chaperone protein HtpG.